A 348-amino-acid chain; its full sequence is Protein pelota homolog (348 aa).

It belongs to the eukaryotic release factor 1 family. Pelota subfamily. As to quaternary structure, monomer. A divalent metal cation is required as a cofactor.

The protein resides in the cytoplasm. In terms of biological role, may function in recognizing stalled ribosomes, interact with stem-loop structures in stalled mRNA molecules, and effect endonucleolytic cleavage of the mRNA. May play a role in the release non-functional ribosomes and degradation of damaged mRNAs. Has endoribonuclease activity. The sequence is that of Protein pelota homolog from Methanococcus maripaludis (strain DSM 14266 / JCM 13030 / NBRC 101832 / S2 / LL).